Consider the following 537-residue polypeptide: CTP synthase (537 aa).

The tract at residues M1 to L268 is amidoligase domain. S14 lines the CTP pocket. S14 provides a ligand contact to UTP. S15–I20 contacts ATP. Residue Y55 participates in L-glutamine binding. An ATP-binding site is contributed by D72. Mg(2+) is bound by residues D72 and E142. CTP-binding positions include D149–E151, K189–Q194, and K225. UTP contacts are provided by residues K189–Q194 and K225. The Glutamine amidotransferase type-1 domain maps to E293–G534. L-glutamine is bound at residue G354. C381 (nucleophile; for glutamine hydrolysis) is an active-site residue. Residues L382–Q385, E405, and R462 each bind L-glutamine. Catalysis depends on residues H507 and E509.

The protein belongs to the CTP synthase family. In terms of assembly, homotetramer.

The catalysed reaction is UTP + L-glutamine + ATP + H2O = CTP + L-glutamate + ADP + phosphate + 2 H(+). It carries out the reaction L-glutamine + H2O = L-glutamate + NH4(+). It catalyses the reaction UTP + NH4(+) + ATP = CTP + ADP + phosphate + 2 H(+). It participates in pyrimidine metabolism; CTP biosynthesis via de novo pathway; CTP from UDP: step 2/2. Allosterically activated by GTP, when glutamine is the substrate; GTP has no effect on the reaction when ammonia is the substrate. The allosteric effector GTP functions by stabilizing the protein conformation that binds the tetrahedral intermediate(s) formed during glutamine hydrolysis. Inhibited by the product CTP, via allosteric rather than competitive inhibition. Catalyzes the ATP-dependent amination of UTP to CTP with either L-glutamine or ammonia as the source of nitrogen. Regulates intracellular CTP levels through interactions with the four ribonucleotide triphosphates. The chain is CTP synthase from Moorella thermoacetica (strain ATCC 39073 / JCM 9320).